The sequence spans 380 residues: Lipid-A-disaccharide synthase (380 aa).

The protein belongs to the LpxB family.

The enzyme catalyses a lipid X + a UDP-2-N,3-O-bis[(3R)-3-hydroxyacyl]-alpha-D-glucosamine = a lipid A disaccharide + UDP + H(+). The protein operates within bacterial outer membrane biogenesis; LPS lipid A biosynthesis. Functionally, condensation of UDP-2,3-diacylglucosamine and 2,3-diacylglucosamine-1-phosphate to form lipid A disaccharide, a precursor of lipid A, a phosphorylated glycolipid that anchors the lipopolysaccharide to the outer membrane of the cell. This is Lipid-A-disaccharide synthase from Photobacterium profundum (strain SS9).